A 335-amino-acid chain; its full sequence is Cell division protein ZipA (335 aa).

Residues 1–4 are Periplasmic-facing; that stretch reads MDLN. A helical transmembrane segment spans residues 5–25; that stretch reads AILIILGVIALIILVAHGIWS. Residues 26-335 are Cytoplasmic-facing; that stretch reads NRREKSQYFE…AERDYLARVS (310 aa).

It belongs to the ZipA family. As to quaternary structure, interacts with FtsZ via their C-terminal domains.

Its subcellular location is the cell inner membrane. Essential cell division protein that stabilizes the FtsZ protofilaments by cross-linking them and that serves as a cytoplasmic membrane anchor for the Z ring. Also required for the recruitment to the septal ring of downstream cell division proteins. The sequence is that of Cell division protein ZipA from Histophilus somni (strain 2336) (Haemophilus somnus).